Consider the following 210-residue polypeptide: Large ribosomal subunit protein bL25 (210 aa).

Residues methionine 1–threonine 23 form a disordered region.

It belongs to the bacterial ribosomal protein bL25 family. CTC subfamily. As to quaternary structure, part of the 50S ribosomal subunit; part of the 5S rRNA/L5/L18/L25 subcomplex. Contacts the 5S rRNA. Binds to the 5S rRNA independently of L5 and L18.

Functionally, this is one of the proteins that binds to the 5S RNA in the ribosome where it forms part of the central protuberance. The protein is Large ribosomal subunit protein bL25 of Rhodospirillum rubrum (strain ATCC 11170 / ATH 1.1.1 / DSM 467 / LMG 4362 / NCIMB 8255 / S1).